Here is a 375-residue protein sequence, read N- to C-terminus: Ferredoxin--NADP reductase, root-type isozyme, chloroplastic (375 aa).

A chloroplast-targeting transit peptide spans 1–60 (MAHSALSQVSVAVPLQTDSSFRRSTFKATSITFSDRSSWISMPPIDLKAAPSRNQHIVCM). The region spanning 91-219 (KEPYTATIVS…TGPSGKIMLL (129 aa)) is the FAD-binding FR-type domain. Residues 151–154 (RLYL), 172–174 (CVR), Tyr178, 193–195 (VCS), and Thr235 each bind FAD. Arg174 is a binding site for NADP(+). Residues Thr235, 266–267 (VA), 296–297 (SR), Lys306, 334–335 (GL), and Glu373 contribute to the NADP(+) site.

The protein belongs to the ferredoxin--NADP reductase type 1 family. It depends on FAD as a cofactor.

It localises to the plastid. The protein localises to the chloroplast. It catalyses the reaction 2 reduced [2Fe-2S]-[ferredoxin] + NADP(+) + H(+) = 2 oxidized [2Fe-2S]-[ferredoxin] + NADPH. It participates in energy metabolism; photosynthesis. May play a key role in regulating the relative amounts of cyclic and non-cyclic electron flow to meet the demands of the plant for ATP and reducing power. Is involved in nitrate assimilation. The chain is Ferredoxin--NADP reductase, root-type isozyme, chloroplastic from Nicotiana tabacum (Common tobacco).